The primary structure comprises 254 residues: Probable derlin-2 homolog (254 aa).

At 1 to 17 (MAQPFEDWYKNLPIVTK) the chain is on the cytoplasmic side. Residues 18–38 (IYMTGCVVTSVSVYLGLVGPL) form a helical membrane-spanning segment. Residues 39 to 95 (RLYLNFPLVFGKYEFWRLFTNFFFYDEIGMNFFFHMYFLVRHSRLLEESSFRGRSAD) are Lumenal-facing. The chain crosses the membrane as a helical span at residues 96–116 (YLFMWIFGSFLLLIMDAFLFY). Residues 117–118 (TK) are Cytoplasmic-facing. The helical transmembrane segment at 119–139 (IVTKVLFLAPSIAFMVIYVWS) threads the bilayer. Over 140 to 146 (RRNPNMH) the chain is Lumenal. The helical transmembrane segment at 147 to 167 (ISFLGLFTFSAPYLPWVILIM) threads the bilayer. Topologically, residues 168–254 (GYLFNHDLTT…FLNEDDLDQQ (87 aa)) are cytoplasmic.

The protein belongs to the derlin family.

The protein localises to the endoplasmic reticulum membrane. Its function is as follows. May be involved in the degradation process of specific misfolded endoplasmic reticulum (ER) luminal proteins. May also be involved in endoplasmic reticulum stress-induced pre-emptive quality control, a mechanism that selectively attenuates the translocation of newly synthesized proteins into the endoplasmic reticulum and reroutes them to the cytosol for proteasomal degradation. The sequence is that of Probable derlin-2 homolog (derl2) from Dictyostelium discoideum (Social amoeba).